Here is a 451-residue protein sequence, read N- to C-terminus: TERF1-interacting nuclear factor 2 (451 aa).

The residue at position 2 (alanine 2) is an N-acetylalanine. Positions 229–257 (NPLPKAKPGTHLPQGPSSRTHPEPLAGRH) are disordered. Residues 256–278 (RHFNLAPLGRRRVQSQWASTRGG) carry the TBM motif. Residues 262 to 268 (PLGRRRV) carry the Nuclear localization signal motif. Residue serine 295 is modified to Phosphoserine. Glycyl lysine isopeptide (Lys-Gly) (interchain with G-Cter in SUMO2) cross-links involve residues lysine 302, lysine 306, lysine 341, and lysine 353.

As to quaternary structure, monomer. Found in a complex with POT1; TERF1 and TNKS1. Component of the shelterin complex (telosome) composed of TERF1, TERF2, TINF2, TERF2IP ACD and POT1. Interacts with TERF1, TERF2 and ACD. In terms of tissue distribution, detected in heart, brain, placenta, lung, liver, skeletal muscle, kidney and pancreas.

The protein resides in the nucleus. It is found in the chromosome. Its subcellular location is the telomere. It localises to the nucleus matrix. In terms of biological role, component of the shelterin complex (telosome) that is involved in the regulation of telomere length and protection. Shelterin associates with arrays of double-stranded TTAGGG repeats added by telomerase and protects chromosome ends; without its protective activity, telomeres are no longer hidden from the DNA damage surveillance and chromosome ends are inappropriately processed by DNA repair pathways. Plays a role in shelterin complex assembly. Isoform 1 may have additional role in tethering telomeres to the nuclear matrix. The chain is TERF1-interacting nuclear factor 2 (TINF2) from Homo sapiens (Human).